A 117-amino-acid chain; its full sequence is Large ribosomal subunit protein uL18 (117 aa).

It belongs to the universal ribosomal protein uL18 family. Part of the 50S ribosomal subunit; part of the 5S rRNA/L5/L18/L25 subcomplex. Contacts the 5S and 23S rRNAs.

Its function is as follows. This is one of the proteins that bind and probably mediate the attachment of the 5S RNA into the large ribosomal subunit, where it forms part of the central protuberance. The protein is Large ribosomal subunit protein uL18 of Pectobacterium atrosepticum (strain SCRI 1043 / ATCC BAA-672) (Erwinia carotovora subsp. atroseptica).